The chain runs to 327 residues: GTP 3',8-cyclase (327 aa).

The Radical SAM core domain maps to 4 to 226; that stretch reads AFARDIHYLR…LRLGDHPGIR (223 aa). Arg13 is a GTP binding site. Cys20 and Cys24 together coordinate [4Fe-4S] cluster. S-adenosyl-L-methionine is bound at residue Tyr26. Cys27 provides a ligand contact to [4Fe-4S] cluster. Arg63 provides a ligand contact to GTP. Gly67 contacts S-adenosyl-L-methionine. GTP is bound at residue Thr94. Ser118 is an S-adenosyl-L-methionine binding site. Residue Lys155 participates in GTP binding. Met189 contacts S-adenosyl-L-methionine. Residues Cys254 and Cys257 each contribute to the [4Fe-4S] cluster site. 259–261 contacts GTP; sequence RLR. Cys271 contacts [4Fe-4S] cluster.

It belongs to the radical SAM superfamily. MoaA family. As to quaternary structure, monomer and homodimer. The cofactor is [4Fe-4S] cluster.

The catalysed reaction is GTP + AH2 + S-adenosyl-L-methionine = (8S)-3',8-cyclo-7,8-dihydroguanosine 5'-triphosphate + 5'-deoxyadenosine + L-methionine + A + H(+). It participates in cofactor biosynthesis; molybdopterin biosynthesis. In terms of biological role, catalyzes the cyclization of GTP to (8S)-3',8-cyclo-7,8-dihydroguanosine 5'-triphosphate. This is GTP 3',8-cyclase from Heliobacterium modesticaldum (strain ATCC 51547 / Ice1).